A 628-amino-acid chain; its full sequence is tRNA uridine 5-carboxymethylaminomethyl modification enzyme MnmG (628 aa).

FAD-binding positions include 11-16 (GAGHAG), valine 123, and serine 178. 271–285 (GPRYCPSIETKIVTF) provides a ligand contact to NAD(+). Glutamine 368 is an FAD binding site.

The protein belongs to the MnmG family. As to quaternary structure, homodimer. Heterotetramer of two MnmE and two MnmG subunits. It depends on FAD as a cofactor.

The protein localises to the cytoplasm. Its function is as follows. NAD-binding protein involved in the addition of a carboxymethylaminomethyl (cmnm) group at the wobble position (U34) of certain tRNAs, forming tRNA-cmnm(5)s(2)U34. This chain is tRNA uridine 5-carboxymethylaminomethyl modification enzyme MnmG, found in Bacteroides thetaiotaomicron (strain ATCC 29148 / DSM 2079 / JCM 5827 / CCUG 10774 / NCTC 10582 / VPI-5482 / E50).